We begin with the raw amino-acid sequence, 231 residues long: Chromosome partition protein MukE (231 aa).

The segment at Met195 to Glu231 is disordered. Acidic residues predominate over residues Asp213–Glu231.

Belongs to the MukE family. Interacts, and probably forms a ternary complex, with MukF and MukB. The complex formation is stimulated by calcium or magnesium.

It is found in the cytoplasm. The protein resides in the nucleoid. Functionally, involved in chromosome condensation, segregation and cell cycle progression. May participate in facilitating chromosome segregation by condensation DNA from both sides of a centrally located replisome during cell division. Probably acts via its interaction with MukB and MukF. The sequence is that of Chromosome partition protein MukE from Pectobacterium atrosepticum (strain SCRI 1043 / ATCC BAA-672) (Erwinia carotovora subsp. atroseptica).